We begin with the raw amino-acid sequence, 21 residues long: Nitrilase (21 aa).

This sequence belongs to the carbon-nitrogen hydrolase superfamily. Nitrilase family.

The enzyme catalyses a nitrile + 2 H2O = a carboxylate + NH4(+). In terms of biological role, acts on many kinds of nitrile compounds such as aliphatic, aromatic, and heterocyclic mononitriles or dinitriles. Prefers S-(-)-2-(4'-isobutylphenyl)-propionitrile to R-(+)-2-(4'-isobutylphenyl)-propionitrile as the substrate. This is Nitrilase from Acinetobacter sp. (strain AK226).